The primary structure comprises 348 residues: MVRTINETFLKACRGERTDYVPAWYMRQAGRSQPEYRKIKEKYSLFEITHNPELCAYVTKLPVDQYNVDAAILYKDIMSPLPAIGVDVEIKSGIGPVIDNPIRSLQDVEKLGEINPEDDVPYILDTIRLLTTEMLDVPLIGFSGAPFTLASYMIEGGPSRNYHNTKAFMYAEPKAWFALIDKLADMVITYLKAQINAGAKAVQIFDSWVGTVNVADYRVFIKPAMERIFAEVRTMGVPMIMHGVGAAHLVNEWHDLPLDVVGLDWRLPIEEARARGVHKAVQGNMDPSFLLAPWSVIEEHVKGILDQGMKQPGYIFNLGHGVFPEVNPDTLKRLTTFIHEYSKGQLAK.

Residues 27-31 (RQAGR), F46, D76, Y152, S207, and H320 each bind substrate.

Belongs to the uroporphyrinogen decarboxylase family. In terms of assembly, homodimer.

It localises to the cytoplasm. The enzyme catalyses uroporphyrinogen III + 4 H(+) = coproporphyrinogen III + 4 CO2. The protein operates within porphyrin-containing compound metabolism; protoporphyrin-IX biosynthesis; coproporphyrinogen-III from 5-aminolevulinate: step 4/4. Catalyzes the decarboxylation of four acetate groups of uroporphyrinogen-III to yield coproporphyrinogen-III. This Bacillus anthracis protein is Uroporphyrinogen decarboxylase.